A 63-amino-acid chain; its full sequence is Large ribosomal subunit protein uL30 (63 aa).

The protein belongs to the universal ribosomal protein uL30 family. In terms of assembly, part of the 50S ribosomal subunit.

The sequence is that of Large ribosomal subunit protein uL30 from Methylobacterium sp. (strain 4-46).